The following is a 161-amino-acid chain: Globin CTT-VIIB-5/CTT-VIIB-9 (161 aa).

The first 16 residues, 1–16 (MKFFAVLALCIVGAIA), serve as a signal peptide directing secretion. The Globin domain occupies 18–161 (PLTADEASLV…NTFAIVVPRL (144 aa)). Heme b is bound by residues H76 and H111.

This sequence belongs to the globin family. Homodimer.

The protein is Globin CTT-VIIB-5/CTT-VIIB-9 (CTT-7B5) of Chironomus thummi thummi (Midge).